We begin with the raw amino-acid sequence, 497 residues long: FAD-linked oxidoreductase fmqD (497 aa).

Positions 1-17 (MQYIPFLISGLVPVALS) are cleaved as a signal peptide. Residues 68 to 243 (NDPSYVATVK…TSATYRIYDQ (176 aa)) enclose the FAD-binding PCMH-type domain. N-linked (GlcNAc...) asparagine glycans are attached at residues Asn99, Asn261, and Asn288.

It belongs to the oxygen-dependent FAD-linked oxidoreductase family.

The protein resides in the secreted. It is found in the cell wall. It participates in alkaloid biosynthesis. Functionally, FAD-linked oxidoreductase; part of the gene cluster that mediates the biosynthesis of the antitumor fumiquinazolines that confer a dual-usage capability to defend against phagocytes in the environment and animal hosts. The simplest member is fumiquinazoline F (FQF) with a 6-6-6 tricyclic core derived from anthranilic acid (Ant), tryptophan (Trp), and alanine (Ala). The trimodular NRPS fmqA is responsible for FQF formation. Modules 1, 2 and 3 of fmqA are predicted to activate and load Ant, Trp and Ala, respectively, providing for the assembly of an Ant-Trp-Ala-S-enzyme intermediate that would undergo double cyclization for chain release and generation of the tricyclic 6-6-6 product fumiquinazoline F. The presence of an E domain predicted for module 2 of fmqA is consistent with epimerization of L-Trp to D-Trp during assembly to generate the R-stereocenter at C14 of FQF. The FAD-dependent monooxygenase fmqB and the monomodular NRPS fmqC then maturate FQF to FQA. FmqB oxidizes the 2',3'-double bond of the indole side chain of FQF, and fmqC activates L-Ala as the adenylate, installs it as the pantetheinyl thioester on its carrier protein domain, and acylates the oxidized indole for subsequent intramolecular cyclization to create the 6-5-5-imidazolindolone of FQA. The FAD-linked oxidoreductase fmqD introduces a third layer of scaffold complexity by converting FQA to the spirohemiaminal FQC, presumably by catalyzing the formation of a transient imine within the pyrazinone ring. FQC subsequently converts nonenzymatically to the known cyclic aminal FQD. This is FAD-linked oxidoreductase fmqD from Aspergillus fumigatus (strain ATCC MYA-4609 / CBS 101355 / FGSC A1100 / Af293) (Neosartorya fumigata).